The sequence spans 998 residues: MKYATGTDNAMTSGISGQTNNSNSASNEMQPTTSTPTAVHKEATSTATTTATYANGNPNPSANPSQSQPSNALFCEQVTTVTNLFEKWNDCERTVVMYALLKRLRYPSLKFLQYSIDSNLTQNLGTSQTNLSSVVIDINANNPVYLQNLLNAYKTFQPCDLLDAMSSSSSDKDSMPCYGSDFQITTSAQCDERKLYARKEDILHEVLNMLPLLKPGNEEAKLIYLTLIPVAVKDTMQQIVPTELVQQIFSYLLIHPAITSEDRRSLNIWLRHLEDHIQAAAAGLTNRSYFLQPSPQLVAGGSSTGSGSCSSSATSSSTASCSSVASSSLCPASGSRSSRTNDWQTIAPPSKQLQNKLAGDWRGSGGGSSSGSINPLCDNLNGITLNELASSQNSLGLSLEGSSSLVNGVVAGAGSMLGIGGGDDHDTSFSKNGTEILDFDPVTADMGEACSLASSSLCGRNGGNTVEDRSQPPPNLQQQLLQPPPYASILMGNVGDQFGEINRWSLDSKIAALKTRRSNSLTTQTISSCSSSSNSSVITVNDNCSNSTENLAQFANKPRSFSLSIEHQRGALMNSGSDTRLDEFKPNYIKFHTRNVGMSGIGLWLKSLRLHKYIELFKNMTYEEMLLITEDFLQSVGVTKGASHKLALCIDKLKERANILNRVEQELLTGQMELSTAVEELTNIVLTPMKPLESPGPPEENIGLRFLKVIDIVTNTLQQDPYAVQDDETLGVLMWILDRSIHNEAFMNHASQLKDLKFKLSKMKISMVPKMHHVKPAGVGPNNGNINKPRWNGKTRKCDTKSGSNDRINNRKNSNDMLNFSLNCLPHPLPHHSQQAPPPLPQFDYNGYGGGPSHQPQYKSSSYPSFMGNPQQQPPPPPSSKSHHHPQQMQQMLQQHNHFPALPQQTPPQSHRRSLNNLILVAGGPQQPQQLIFKPGQGVLTNNGSNDNLGLERNQQPQQQQQRKLSGGVSSAEQQPKKTMAAVVMENLAKFDQHFTLF.

Positions 1–37 are enriched in polar residues; the sequence is MKYATGTDNAMTSGISGQTNNSNSASNEMQPTTSTPT. Disordered regions lie at residues 1–45, 50–69, and 329–370; these read MKYA…EATS, TATYANGNPNPSANPSQSQP, and LCPA…GSSS. Positions 329-338 are enriched in low complexity; that stretch reads LCPASGSRSS. Ser-564 and Ser-575 each carry phosphoserine. Residues 583–763 form an interaction with cup region; sequence EFKPNYIKFH…KDLKFKLSKM (181 aa). The region spanning 600–654 is the SAM domain; sequence GIGLWLKSLRLHKYIELFKNMTYEEMLLITEDFLQSVGVTKGASHKLALCIDKLK. Disordered stretches follow at residues 773–892 and 942–977; these read HVKP…MQQM and NNGSNDNLGLERNQQPQQQQQRKLSGGVSSAEQQPK. Polar residues-rich tracts occupy residues 801 to 822 and 854 to 864; these read KSGSNDRINNRKNSNDMLNFSL and HQPQYKSSSYP. Ser-971 bears the Phosphoserine mark.

It belongs to the SMAUG family. In terms of assembly, interacts with oskar (osk). Binds to the 3'-UTR of nos. Interacts with cup, which in turn recruits eIF4-E, leading to an indirect interaction between smg and eIF4-E that prevents mRNA translation.

The protein localises to the cytoplasm. In terms of biological role, translation regulator that binds to the 3'-UTR of specific mRNAs such as nanos (nos) and prevent their translation. Prevents translation of unlocalized nos in the bulk cytoplasm via the recruitment of cup. This is Protein Smaug from Drosophila simulans (Fruit fly).